A 352-amino-acid chain; its full sequence is Ion-translocating oxidoreductase complex subunit D (352 aa).

Helical transmembrane passes span 20–40, 42–62, 69–91, and 123–143; these read IMLL…WFFG, GTLF…AIVL, VASH…SIPP, and PAMI…TSWL. An FMN phosphoryl threonine modification is found at Thr-187. Helical transmembrane passes span 215-235, 242-262, 267-287, 301-321, and 322-342; these read LAGV…VFLL, WHIP…GWLF, LASP…FFIL, LIFG…GGYP, and DGVA…DYYT.

It belongs to the NqrB/RnfD family. The complex is composed of six subunits: RsxA, RsxB, RsxC, RsxD, RsxE and RsxG. The cofactor is FMN.

The protein localises to the cell inner membrane. Part of a membrane-bound complex that couples electron transfer with translocation of ions across the membrane. Required to maintain the reduced state of SoxR. The chain is Ion-translocating oxidoreductase complex subunit D from Salmonella typhi.